A 339-amino-acid polypeptide reads, in one-letter code: Ferrochelatase (339 aa).

Residues H202 and E283 each coordinate Fe cation.

This sequence belongs to the ferrochelatase family.

The protein resides in the cytoplasm. It carries out the reaction heme b + 2 H(+) = protoporphyrin IX + Fe(2+). Its pathway is porphyrin-containing compound metabolism; protoheme biosynthesis; protoheme from protoporphyrin-IX: step 1/1. Catalyzes the ferrous insertion into protoporphyrin IX. This chain is Ferrochelatase, found in Psychrobacter arcticus (strain DSM 17307 / VKM B-2377 / 273-4).